We begin with the raw amino-acid sequence, 3227 residues long: E3 ubiquitin-protein ligase ptr1 (3227 aa).

Disordered stretches follow at residues 1806–1836, 1869–1894, 1908–1929, and 2577–2607; these read SGAA…PPDL, MEFE…VMYS, QDAS…GDVI, and ATTG…KDKK. The segment covering 1811–1823 has biased composition (low complexity); the sequence is DSMGDQSLSSSSE. Over residues 1883–1894 the composition is skewed to acidic residues; the sequence is VSEDDADDVMYS. A compositionally biased stretch (polar residues) spans 2577-2601; it reads ATTGYTNDQDSRGSTVPKQDPGTTA. The 337-residue stretch at 2891-3227 folds into the HECT domain; sequence DADEVKFSKL…NEGSEGFGFA (337 aa). Catalysis depends on Cys3194, which acts as the Glycyl thioester intermediate.

Belongs to the UPL family. TOM1/PTR1 subfamily.

Its subcellular location is the nucleus. It carries out the reaction S-ubiquitinyl-[E2 ubiquitin-conjugating enzyme]-L-cysteine + [acceptor protein]-L-lysine = [E2 ubiquitin-conjugating enzyme]-L-cysteine + N(6)-ubiquitinyl-[acceptor protein]-L-lysine.. The protein operates within protein modification; protein ubiquitination. Probable ubiquitin ligase protein involved in mRNA export. E3 ubiquitin ligase proteins mediate ubiquitination and subsequent proteasomal degradation of target proteins. Probably participates in mRNA export from the nucleus by regulating the transport of hnRNP proteins such as rae1. The sequence is that of E3 ubiquitin-protein ligase ptr1 (ptr1) from Schizosaccharomyces pombe (strain 972 / ATCC 24843) (Fission yeast).